The following is a 232-amino-acid chain: Uridylate kinase (232 aa).

13–14 provides a ligand contact to ATP; it reads GS. A UMP-binding site is contributed by G52. G53 and R57 together coordinate ATP. UMP-binding positions include D74 and 122-128; that span reads LQPGQST. 3 residues coordinate ATP: T147, Y153, and D156.

It belongs to the UMP kinase family. As to quaternary structure, homohexamer.

The protein localises to the cytoplasm. It carries out the reaction UMP + ATP = UDP + ADP. It participates in pyrimidine metabolism; CTP biosynthesis via de novo pathway; UDP from UMP (UMPK route): step 1/1. Its activity is regulated as follows. Inhibited by UTP. Its function is as follows. Catalyzes the reversible phosphorylation of UMP to UDP. The polypeptide is Uridylate kinase (Thermofilum pendens (strain DSM 2475 / Hrk 5)).